Reading from the N-terminus, the 163-residue chain is Nucleotide-binding protein HSM_1099 (163 aa).

The protein belongs to the YajQ family.

Nucleotide-binding protein. This is Nucleotide-binding protein HSM_1099 from Histophilus somni (strain 2336) (Haemophilus somnus).